The sequence spans 506 residues: Histidine ammonia-lyase (506 aa).

A cross-link (5-imidazolinone (Ala-Gly)) is located at residues 141–143 (ASG). Serine 142 carries the post-translational modification 2,3-didehydroalanine (Ser).

It belongs to the PAL/histidase family. In terms of processing, contains an active site 4-methylidene-imidazol-5-one (MIO), which is formed autocatalytically by cyclization and dehydration of residues Ala-Ser-Gly.

It localises to the cytoplasm. It carries out the reaction L-histidine = trans-urocanate + NH4(+). It functions in the pathway amino-acid degradation; L-histidine degradation into L-glutamate; N-formimidoyl-L-glutamate from L-histidine: step 1/3. The sequence is that of Histidine ammonia-lyase from Burkholderia multivorans (strain ATCC 17616 / 249).